Reading from the N-terminus, the 367-residue chain is Aspartate beta-hydroxylase domain-containing protein 1 (367 aa).

The segment at 1 to 27 (MWRGSSAGGSQGAAMEGTGGELGGQGN) is disordered. Residues 1 to 49 (MWRGSSAGGSQGAAMEGTGGELGGQGNWGLEDAPGLLARASLPIMPAWP) lie on the Cytoplasmic side of the membrane. A helical membrane pass occupies residues 50-72 (LPLASSALTLLLGALTSLFLWYC). Over 73 to 367 (YRLGSQDMQA…ALDFVFAPDP (295 aa)) the chain is Lumenal. The segment at 88-122 (RAGAVGGRPGGCSEAGRPSPGRSGESGEGPRTEGL) is disordered. Ser-106 carries the phosphoserine modification.

Belongs to the aspartyl/asparaginyl beta-hydroxylase family.

The protein resides in the membrane. The sequence is that of Aspartate beta-hydroxylase domain-containing protein 1 (ASPHD1) from Bos taurus (Bovine).